The following is a 682-amino-acid chain: DNA ligase (682 aa).

Residues 42–46 (DAEYD), 91–92 (SL), and glutamate 124 contribute to the NAD(+) site. Lysine 126 functions as the N6-AMP-lysine intermediate in the catalytic mechanism. NAD(+)-binding residues include arginine 147, glutamate 184, lysine 302, and lysine 326. Cysteine 420, cysteine 423, cysteine 438, and cysteine 444 together coordinate Zn(2+). In terms of domain architecture, BRCT spans 603–682 (IADNPLKGKS…QEFIALTGEN (80 aa)).

The protein belongs to the NAD-dependent DNA ligase family. LigA subfamily. Mg(2+) serves as cofactor. Requires Mn(2+) as cofactor.

The catalysed reaction is NAD(+) + (deoxyribonucleotide)n-3'-hydroxyl + 5'-phospho-(deoxyribonucleotide)m = (deoxyribonucleotide)n+m + AMP + beta-nicotinamide D-nucleotide.. Functionally, DNA ligase that catalyzes the formation of phosphodiester linkages between 5'-phosphoryl and 3'-hydroxyl groups in double-stranded DNA using NAD as a coenzyme and as the energy source for the reaction. It is essential for DNA replication and repair of damaged DNA. In Actinobacillus pleuropneumoniae serotype 3 (strain JL03), this protein is DNA ligase.